The chain runs to 435 residues: Serine--tRNA ligase (435 aa).

L-serine is bound at residue 237 to 239 (TAE). 268 to 270 (RSE) serves as a coordination point for ATP. Residue E291 participates in L-serine binding. 355-358 (EISS) serves as a coordination point for ATP. Residue S390 participates in L-serine binding.

The protein belongs to the class-II aminoacyl-tRNA synthetase family. Type-1 seryl-tRNA synthetase subfamily. As to quaternary structure, homodimer. The tRNA molecule binds across the dimer.

It is found in the cytoplasm. It catalyses the reaction tRNA(Ser) + L-serine + ATP = L-seryl-tRNA(Ser) + AMP + diphosphate + H(+). The catalysed reaction is tRNA(Sec) + L-serine + ATP = L-seryl-tRNA(Sec) + AMP + diphosphate + H(+). Its pathway is aminoacyl-tRNA biosynthesis; selenocysteinyl-tRNA(Sec) biosynthesis; L-seryl-tRNA(Sec) from L-serine and tRNA(Sec): step 1/1. Its function is as follows. Catalyzes the attachment of serine to tRNA(Ser). Is also able to aminoacylate tRNA(Sec) with serine, to form the misacylated tRNA L-seryl-tRNA(Sec), which will be further converted into selenocysteinyl-tRNA(Sec). The sequence is that of Serine--tRNA ligase from Lactobacillus acidophilus (strain ATCC 700396 / NCK56 / N2 / NCFM).